A 434-amino-acid polypeptide reads, in one-letter code: Calcium uptake protein 2, mitochondrial (434 aa).

The transit peptide at methionine 1–leucine 22 directs the protein to the mitochondrion. In terms of domain architecture, EF-hand 1 spans lysine 172 to glutamine 207. Ca(2+) is bound by residues aspartate 185, aspartate 187, asparagine 189, methionine 191, glutamate 193, and glutamate 196. Serine 205 carries the post-translational modification Phosphoserine. The region spanning glutamate 227–glutamate 262 is the EF-hand 2; degenerate domain. An EF-hand 3; degenerate domain is found at threonine 293 to leucine 328. An EF-hand 4 domain is found at leucine 362–arginine 397. Residues aspartate 375, aspartate 377, aspartate 379, cysteine 381, and glutamate 386 each contribute to the Ca(2+) site.

It belongs to the MICU1 family. MICU2 subfamily. As to quaternary structure, heterodimer; disulfide-linked; heterodimerizes with MICU1. Component of the uniplex complex, composed of MCU, EMRE/SMDT1, MICU1 and MICU2 in a 4:4:1:1 stoichiometry.

Its subcellular location is the mitochondrion intermembrane space. The protein resides in the mitochondrion inner membrane. Calcium sensor of the mitochondrial calcium uniporter (MCU) channel, which senses calcium level via its EF-hand domains. MICU1 and MICU2 form a disulfide-linked heterodimer that stimulates and inhibits MCU activity, depending on the concentration of calcium. At low calcium levels, MICU1 occludes the pore of the MCU channel, preventing mitochondrial calcium uptake. At higher calcium levels, calcium-binding to MICU1 and MICU2 induces a conformational change that weakens MCU-MICU1 interactions and moves the MICU1-MICU2 heterodimer away from the pore, allowing calcium permeation through the MCU channel. In Homo sapiens (Human), this protein is Calcium uptake protein 2, mitochondrial.